A 1226-amino-acid chain; its full sequence is Probable phosphorylase b kinase regulatory subunit alpha (1226 aa).

The segment at 666–688 is disordered; it reads NEKITTPRGPRTLRRGESVKDRS. The span at 679-688 shows a compositional bias: basic and acidic residues; it reads RRGESVKDRS.

This sequence belongs to the phosphorylase b kinase regulatory chain family.

It participates in glycan biosynthesis; glycogen metabolism. Functionally, phosphorylase b kinase catalyzes the phosphorylation of serine in certain substrates, including troponin I. The alpha chain may bind calmodulin. This is Probable phosphorylase b kinase regulatory subunit alpha from Caenorhabditis elegans.